The chain runs to 233 residues: Large ribosomal subunit protein eL6y (233 aa).

Over residues 48 to 72 (HDAKSKVDAPVEKPPKFYPAEDVKK) the composition is skewed to basic and acidic residues. The segment at 48 to 82 (HDAKSKVDAPVEKPPKFYPAEDVKKPLPNRRTAKP) is disordered.

It belongs to the eukaryotic ribosomal protein eL6 family.

In Arabidopsis thaliana (Mouse-ear cress), this protein is Large ribosomal subunit protein eL6y (RPL6B).